A 191-amino-acid chain; its full sequence is Xanthine phosphoribosyltransferase (191 aa).

The xanthine site is built by Leu20 and Asn27. 128-132 (ANGQA) is a binding site for 5-phospho-alpha-D-ribose 1-diphosphate. Lys156 lines the xanthine pocket.

It belongs to the purine/pyrimidine phosphoribosyltransferase family. Xpt subfamily. As to quaternary structure, homodimer.

It localises to the cytoplasm. It carries out the reaction XMP + diphosphate = xanthine + 5-phospho-alpha-D-ribose 1-diphosphate. Its pathway is purine metabolism; XMP biosynthesis via salvage pathway; XMP from xanthine: step 1/1. Converts the preformed base xanthine, a product of nucleic acid breakdown, to xanthosine 5'-monophosphate (XMP), so it can be reused for RNA or DNA synthesis. This chain is Xanthine phosphoribosyltransferase, found in Acinetobacter baumannii (strain AB307-0294).